A 535-amino-acid chain; its full sequence is RNA-splicing ligase RtcB homolog 1 (535 aa).

Residues methionine 1–glutamine 16 are compositionally biased toward basic residues. Positions methionine 1 to serine 29 are disordered. 5 residues coordinate Mn(2+): aspartate 152, cysteine 155, histidine 260, histidine 292, and histidine 383. Residue asparagine 259–glutamate 263 coordinates GMP. GMP-binding positions include histidine 383–asparagine 384, glycine 432–methionine 435, serine 439, histidine 458–glycine 461, and lysine 534. Histidine 458 serves as the catalytic GMP-histidine intermediate.

This sequence belongs to the RtcB family. In terms of assembly, catalytic component of the tRNA-splicing ligase complex. Requires Mn(2+) as cofactor.

The catalysed reaction is a 3'-end 3'-phospho-ribonucleotide-RNA + a 5'-end dephospho-ribonucleoside-RNA + GTP = a ribonucleotidyl-ribonucleotide-RNA + GMP + diphosphate. It catalyses the reaction a 3'-end 2',3'-cyclophospho-ribonucleotide-RNA + a 5'-end dephospho-ribonucleoside-RNA + GTP + H2O = a ribonucleotidyl-ribonucleotide-RNA + GMP + diphosphate + H(+). Its function is as follows. Catalytic subunit of the tRNA-splicing ligase complex that acts by directly joining spliced tRNA halves to mature-sized tRNAs by incorporating the precursor-derived splice junction phosphate into the mature tRNA as a canonical 3',5'-phosphodiester. May act as an RNA ligase with broad substrate specificity, and may function toward other RNAs. The polypeptide is RNA-splicing ligase RtcB homolog 1 (Entamoeba dispar (strain ATCC PRA-260 / SAW760)).